The primary structure comprises 209 residues: Ribonuclease HII (209 aa).

The RNase H type-2 domain occupies 7-198 (GPVAGVDEAG…VAKAHQEWLH (192 aa)). Residues aspartate 13, glutamate 14, and aspartate 107 each coordinate a divalent metal cation.

Belongs to the RNase HII family. It depends on Mn(2+) as a cofactor. The cofactor is Mg(2+).

The protein resides in the cytoplasm. The catalysed reaction is Endonucleolytic cleavage to 5'-phosphomonoester.. In terms of biological role, endonuclease that specifically degrades the RNA of RNA-DNA hybrids. The sequence is that of Ribonuclease HII from Corynebacterium glutamicum (strain ATCC 13032 / DSM 20300 / JCM 1318 / BCRC 11384 / CCUG 27702 / LMG 3730 / NBRC 12168 / NCIMB 10025 / NRRL B-2784 / 534).